We begin with the raw amino-acid sequence, 57 residues long: Large ribosomal subunit protein bL32 (57 aa).

The span at 1–19 (MAVPKRRMSRANTRSRRAQ) shows a compositional bias: basic residues. The interval 1–20 (MAVPKRRMSRANTRSRRAQW) is disordered.

Belongs to the bacterial ribosomal protein bL32 family.

This is Large ribosomal subunit protein bL32 from Mycolicibacterium smegmatis (strain ATCC 700084 / mc(2)155) (Mycobacterium smegmatis).